The sequence spans 188 residues: Large ribosomal subunit protein eL18 (188 aa).

Residue Lys-119 forms a Glycyl lysine isopeptide (Lys-Gly) (interchain with G-Cter in SUMO2) linkage. Phosphoserine is present on Ser-130. The segment at 150 to 188 (RHFGKAPGTPHSHTKPYVRSKGRKFERARGRRASRGYKN) is disordered. Thr-158 is subject to Phosphothreonine. 2 stretches are compositionally biased toward basic residues: residues 161-171 (SHTKPYVRSKG) and 178-188 (RGRRASRGYKN). Lys-164 participates in a covalent cross-link: Glycyl lysine isopeptide (Lys-Gly) (interchain with G-Cter in SUMO2).

The protein belongs to the eukaryotic ribosomal protein eL18 family. As to quaternary structure, component of the large ribosomal subunit.

It localises to the cytoplasm. The protein localises to the cytosol. The protein resides in the rough endoplasmic reticulum. Component of the large ribosomal subunit. The ribosome is a large ribonucleoprotein complex responsible for the synthesis of proteins in the cell. The sequence is that of Large ribosomal subunit protein eL18 (RPL18) from Bos taurus (Bovine).